The following is a 96-amino-acid chain: Large ribosomal subunit protein uL23 (96 aa).

It belongs to the universal ribosomal protein uL23 family. In terms of assembly, part of the 50S ribosomal subunit. Contacts protein L29, and trigger factor when it is bound to the ribosome.

Its function is as follows. One of the early assembly proteins it binds 23S rRNA. One of the proteins that surrounds the polypeptide exit tunnel on the outside of the ribosome. Forms the main docking site for trigger factor binding to the ribosome. The chain is Large ribosomal subunit protein uL23 from Finegoldia magna (strain ATCC 29328 / DSM 20472 / WAL 2508) (Peptostreptococcus magnus).